The sequence spans 198 residues: MEKYLSLSGNHSSNKRSLEGLSAFRSLEELILDNNQLGDDLVLPGLPRLHTLTLNKNRITDLENLLDHLAEVTPALEYLSLLGNVACPNELVSLEKDEEDYKRYRCFVLYKLPNLKFLDAQKVTRQEREEALVRGVFMKVVKPKASSEDVASSPERHYTPLPSASRELTSHQGVLGKCRYVYYGKNSEGNRFIRDDQL.

4 LRR repeats span residues 2–22 (EKYLSLSGNHSSNKRSLEGLS), 26–47 (SLEELILDNNQLGDDLVLPGLP), 48–69 (RLHTLTLNKNRITDLENLLDHL), and 75–95 (ALEYLSLLGNVACPNELVSLE). The LRRCT domain maps to 96–134 (KDEEDYKRYRCFVLYKLPNLKFLDAQKVTRQEREEALVR).

In terms of tissue distribution, in the embryo, expressed in melanoblasts. In the fetus, expressed in melanocytes. Not detected in retinal pigment epithelial cells.

Functionally, required for melanocyte differentiation. This Homo sapiens (Human) protein is Leucine-rich melanocyte differentiation-associated protein.